The chain runs to 244 residues: Phosphoadenosine 5'-phosphosulfate reductase (244 aa).

Residue Cys-239 is the Nucleophile; cysteine thiosulfonate intermediate of the active site.

The protein belongs to the PAPS reductase family. CysH subfamily.

The protein localises to the cytoplasm. It carries out the reaction [thioredoxin]-disulfide + sulfite + adenosine 3',5'-bisphosphate + 2 H(+) = [thioredoxin]-dithiol + 3'-phosphoadenylyl sulfate. Its pathway is sulfur metabolism; hydrogen sulfide biosynthesis; sulfite from sulfate: step 3/3. Catalyzes the formation of sulfite from phosphoadenosine 5'-phosphosulfate (PAPS) using thioredoxin as an electron donor. This Salmonella choleraesuis (strain SC-B67) protein is Phosphoadenosine 5'-phosphosulfate reductase.